The chain runs to 161 residues: Nucleotide-binding protein Bcenmc03_2579 (161 aa).

This sequence belongs to the YajQ family.

In terms of biological role, nucleotide-binding protein. This chain is Nucleotide-binding protein Bcenmc03_2579, found in Burkholderia orbicola (strain MC0-3).